Consider the following 643-residue polypeptide: Protein disulfide-isomerase A4 (643 aa).

Positions Met1–Ala20 are cleaved as a signal peptide. 2 Thioredoxin domains span residues Ala21–Gln167 and Gln167–Lys299. Residues Ala24–Glu58 form a disordered region. The segment covering Ser32–Val56 has biased composition (acidic residues). The CXXC motif lies at Cys89–Cys92. 2 disulfides stabilise this stretch: Cys89–Cys92 and Cys204–Cys207. An N6-acetyllysine modification is found at Lys364. The 132-residue stretch at Phe503–Thr634 folds into the Thioredoxin 3 domain. The CXXC motif lies at Cys553–Cys556. Cys553 and Cys556 are disulfide-bonded. The Prevents secretion from ER motif lies at Lys640–Leu643.

The protein belongs to the protein disulfide isomerase family. In terms of assembly, part of a large chaperone multiprotein complex comprising DNAJB11, HSP90B1, HSPA5, HYOU, PDIA2, PDIA4, PDIA6, PPIB, SDF2L1, UGGT1 and very small amounts of ERP29, but not, or at very low levels, CALR nor CANX. Component of a complex containing at least CRELD2, MANF, MATN3 and PDIA4. Post-translationally, O-glycosylated.

It localises to the endoplasmic reticulum lumen. Its subcellular location is the melanosome. The enzyme catalyses Catalyzes the rearrangement of -S-S- bonds in proteins.. The sequence is that of Protein disulfide-isomerase A4 (Pdia4) from Rattus norvegicus (Rat).